A 428-amino-acid chain; its full sequence is C4-dicarboxylate transport protein (428 aa).

The next 9 membrane-spanning stretches (helical) occupy residues 4-24 (SLFKSLYFQVLTAIAIGILLG), 44-64 (LIKMVIAPVIFCTVVTGIAGM), 76-96 (VALLYFEIVSTIALIIGLIIV), 142-162 (IGAFASGNILQVLLFAVMFGF), 184-204 (VIFGIINMIMRLAPIGAFGAM), 222-242 (LIVCFYITCILFVVVVLGSIA), 289-309 (VVGLVIPTGYSFNLDGTSIYL), 326-346 (IFHQVTLLVVLLLSSKGAAGV), and 352-372 (IVLAATISAVGHLPVAGLALI).

This sequence belongs to the dicarboxylate/amino acid:cation symporter (DAACS) (TC 2.A.23) family.

It localises to the cell inner membrane. In terms of biological role, responsible for the transport of dicarboxylates such as succinate, fumarate, and malate from the periplasm across the membrane. The chain is C4-dicarboxylate transport protein from Citrobacter koseri (strain ATCC BAA-895 / CDC 4225-83 / SGSC4696).